The following is a 170-amino-acid chain: Peroxidase 2 (170 aa).

A glycan (N-linked (GlcNAc...) asparagine) is linked at N9. H24 is a heme b binding site. T25 contributes to the Ca(2+) binding site. The cysteines at positions 31 and 59 are disulfide-linked. Positions 73, 76, and 81 each coordinate Ca(2+).

The protein belongs to the peroxidase family. Classical plant (class III) peroxidase subfamily. Ca(2+) is required as a cofactor. The cofactor is heme b.

The catalysed reaction is 2 a phenolic donor + H2O2 = 2 a phenolic radical donor + 2 H2O. In terms of biological role, removal of H(2)O(2), oxidation of toxic reductants, biosynthesis and degradation of lignin, suberization, auxin catabolism, response to environmental stresses such as wounding, pathogen attack and oxidative stress. These functions might be dependent on each isozyme/isoform in each plant tissue. Involved in defense response to powdery meldew fungus. This chain is Peroxidase 2, found in Hordeum vulgare (Barley).